Here is a 507-residue protein sequence, read N- to C-terminus: Maturase K (507 aa).

Belongs to the intron maturase 2 family. MatK subfamily.

It localises to the plastid. It is found in the chloroplast. Usually encoded in the trnK tRNA gene intron. Probably assists in splicing its own and other chloroplast group II introns. The chain is Maturase K from Magnolia figo (Banana shrub).